The following is a 672-amino-acid chain: Beta-galactosidase BgaB (672 aa).

Substrate is bound at residue Arg-109. A Zn(2+)-binding site is contributed by Cys-113. Asn-147 contributes to the substrate binding site. The active-site Proton donor is Glu-148. The Zn(2+) site is built by Cys-156, Cys-158, and Cys-161. Residue Glu-303 is the Nucleophile of the active site. Residues Trp-311 and 351-354 (EKFH) contribute to the substrate site.

It belongs to the glycosyl hydrolase 42 family.

The enzyme catalyses Hydrolysis of terminal non-reducing beta-D-galactose residues in beta-D-galactosides.. This chain is Beta-galactosidase BgaB, found in Geobacillus sp. (strain Y412MC61).